The following is a 335-amino-acid chain: Protein-arginine kinase (335 aa).

The region spanning 21–244 is the Phosphagen kinase C-terminal domain; sequence VIISSRIRLA…NQIINEEKQI (224 aa). ATP is bound by residues 24-28, histidine 82, arginine 115, 166-170, and 197-202; these read SSRIR, RASVM, and RGIYGE.

Belongs to the ATP:guanido phosphotransferase family.

It carries out the reaction L-arginyl-[protein] + ATP = N(omega)-phospho-L-arginyl-[protein] + ADP + H(+). Functionally, catalyzes the specific phosphorylation of arginine residues in proteins. In Staphylococcus epidermidis (strain ATCC 12228 / FDA PCI 1200), this protein is Protein-arginine kinase.